The sequence spans 268 residues: Tryptophan synthase alpha chain (268 aa).

Residues E49 and D60 each act as proton acceptor in the active site.

This sequence belongs to the TrpA family. As to quaternary structure, tetramer of two alpha and two beta chains.

It carries out the reaction (1S,2R)-1-C-(indol-3-yl)glycerol 3-phosphate + L-serine = D-glyceraldehyde 3-phosphate + L-tryptophan + H2O. It participates in amino-acid biosynthesis; L-tryptophan biosynthesis; L-tryptophan from chorismate: step 5/5. In terms of biological role, the alpha subunit is responsible for the aldol cleavage of indoleglycerol phosphate to indole and glyceraldehyde 3-phosphate. This is Tryptophan synthase alpha chain from Pseudomonas paraeruginosa (strain DSM 24068 / PA7) (Pseudomonas aeruginosa (strain PA7)).